We begin with the raw amino-acid sequence, 600 residues long: L-galactono-1,4-lactone dehydrogenase, mitochondrial (600 aa).

A mitochondrion-targeting transit peptide spans 1-25 (MLRSLLLRRSNARSLRPPFPPLRTL). The tract at residues 16-51 (RPPFPPLRTLCTSGQTLTPAPPPPPPPPPPISSSAS) is disordered. Residues 26–91 (CTSGQTLTPA…AKHKKAQIFR (66 aa)) constitute a propeptide, removed in mature form. The segment covering 34–46 (PAPPPPPPPPPPI) has biased composition (pro residues). Residues 58-74 (YAGYAALALFSGAATYF) traverse the membrane as a helical segment. The FAD-binding PCMH-type domain maps to 108 to 279 (THEVQTRNFN…AEVTLQCVER (172 aa)).

Requires FAD as cofactor.

The protein localises to the mitochondrion membrane. The enzyme catalyses L-galactono-1,4-lactone + 4 Fe(III)-[cytochrome c] = L-dehydroascorbate + 4 Fe(II)-[cytochrome c] + 5 H(+). Its pathway is cofactor biosynthesis; L-ascorbate biosynthesis. Inhibited by sulfhydryl-modifying agents such as N-ethylmaleimide, monoiodoacetic acid and p-hydroxymercuribenzoic acid. No inhibition by riboflavin and lycorine. In terms of biological role, involved in the biosynthesis of ascorbic acid. Uses L-galactono-1,4-lactone as substrate, but not L-gulono-1,4-lactone, D-galactono-1,4-lactone, D-gulono-1,4-lactone, D-erythronic-1,4-lactone, D-xylonic-1,4-lactone, L-mannono-1,4-lactone, D-galactonic acid, D-glucuronic acid or D-gluconic acid. FAD, NAD, NADP and O(2) cannot act as electron acceptor. This chain is L-galactono-1,4-lactone dehydrogenase, mitochondrial, found in Brassica oleracea (Wild cabbage).